Here is a 246-residue protein sequence, read N- to C-terminus: Probable transcriptional regulatory protein RD1_2018 (246 aa).

The protein belongs to the TACO1 family.

It localises to the cytoplasm. The sequence is that of Probable transcriptional regulatory protein RD1_2018 from Roseobacter denitrificans (strain ATCC 33942 / OCh 114) (Erythrobacter sp. (strain OCh 114)).